A 317-amino-acid polypeptide reads, in one-letter code: Peroxidase 22.3 (317 aa).

Positions 1–25 are cleaved as a signal peptide; it reads MASATNSSLSLMLLVAAAMASVASA. Gln26 bears the Pyrrolidone carboxylic acid mark. 2 disulfide bridges follow: Cys36–Cys111 and Cys69–Cys74. The active-site Proton acceptor is His67. Positions 68, 71, 73, 75, and 77 each coordinate Ca(2+). N-linked (GlcNAc...) asparagine glycosylation is present at Asn112. 2 disulfide bridges follow: Cys117-Cys312 and Cys196-Cys221. A substrate-binding site is contributed by Pro159. The N-linked (GlcNAc...) asparagine glycan is linked to Asn171. Position 189 (His189) interacts with heme b. Thr190 lines the Ca(2+) pocket. N-linked (GlcNAc...) asparagine glycosylation is present at Asn205. The Ca(2+) site is built by Asp236, Thr239, and Asp244.

It belongs to the peroxidase family. Classical plant (class III) peroxidase subfamily. Heme b serves as cofactor. It depends on Ca(2+) as a cofactor.

It localises to the secreted. It carries out the reaction H2O2 + AH2 = A + 2 H2O. Removal of H(2)O(2), oxidation of toxic reductants, biosynthesis and degradation of lignin, suberization, auxin catabolism, response to environmental stresses such as wounding, pathogen attack and oxidative stress. These functions might be dependent on each isozyme/isoform in each plant tissue. This is Peroxidase 22.3 from Oryza sativa subsp. japonica (Rice).